A 1266-amino-acid polypeptide reads, in one-letter code: Rho GTPase-activating protein 29 (1266 aa).

Phosphoserine occurs at positions 171, 176, 179, and 190. Residues 192-462 (IELDNLLLKN…SAKLYDPGQE (271 aa)) form the F-BAR domain. Residues 296–418 (RKNEMEKQRK…EILTQLRTLV (123 aa)) adopt a coiled-coil conformation. The tract at residues 482-501 (NVNKQMTNSPQTSGYEPADS) is disordered. Residues 483–495 (VNKQMTNSPQTSG) show a composition bias toward polar residues. Residues Ser501, Ser521, and Ser554 each carry the phosphoserine modification. The span at 542-561 (DSESTGGSSESRSLDSESIS) shows a compositional bias: low complexity. The disordered stretch occupies residues 542–601 (DSESTGGSSESRSLDSESISPGDFHRKLPRTPSSGTMSSADDLDEREPPSPSEAGPNSLG). The segment at 614–659 (THKFRKLRSPTKCRDCDGIVMFPGVECEECLLVCHRKCLENLVIIC) adopts a Phorbol-ester/DAG-type zinc-finger fold. A Rho-GAP domain is found at 673–888 (AEFIQVAKKE…FLITYSQKIF (216 aa)). 3 positions are modified to phosphoserine: Ser920, Ser956, and Ser1028. Disordered stretches follow at residues 1039-1081 (SSPT…KVNG), 1116-1157 (GLTV…ATAV), and 1209-1266 (KSDP…PQFV). Over residues 1072 to 1081 (SNTTRSKVNG) the composition is skewed to polar residues. Residues 1124 to 1136 (NRDHPGSKAHAEP) are compositionally biased toward basic and acidic residues. 2 positions are modified to phosphoserine: Ser1149 and Ser1151. A compositionally biased stretch (acidic residues) spans 1256-1266 (EDLEDEIPQFV). The interval 1263-1266 (PQFV) is interaction with PTPN13/PTPL1.

As to quaternary structure, interacts with PTPN13/PTPL1. Interacts with RAP2A via its coiled coil domain. Interacts with RASIP1.

GTPase activator for the Rho-type GTPases by converting them to an inactive GDP-bound state. Has strong activity toward RHOA, and weaker activity toward RAC1 and CDC42. May act as a specific effector of RAP2A to regulate Rho. In concert with RASIP1, suppresses RhoA signaling and dampens ROCK and MYH9 activities in endothelial cells and plays an essential role in blood vessel tubulogenesis. This is Rho GTPase-activating protein 29 (Arhgap29) from Mus musculus (Mouse).